The chain runs to 103 residues: Large ribosomal subunit protein bL21 (103 aa).

The protein belongs to the bacterial ribosomal protein bL21 family. As to quaternary structure, part of the 50S ribosomal subunit. Contacts protein L20.

Functionally, this protein binds to 23S rRNA in the presence of protein L20. This Lactobacillus johnsonii (strain CNCM I-12250 / La1 / NCC 533) protein is Large ribosomal subunit protein bL21.